The primary structure comprises 76 residues: Putative membrane protein insertion efficiency factor (76 aa).

Belongs to the UPF0161 family.

Its subcellular location is the cell inner membrane. Functionally, could be involved in insertion of integral membrane proteins into the membrane. This Paraburkholderia phytofirmans (strain DSM 17436 / LMG 22146 / PsJN) (Burkholderia phytofirmans) protein is Putative membrane protein insertion efficiency factor.